A 91-amino-acid chain; its full sequence is MYLTSEIKKEIFKTNGTAKSATDTGSPESQIALFSHRIAHLTEHLKVNKKDYSTQLGLMKLVGKRRRLLNYLQKTEISRYRAIIAQLNLRK.

Belongs to the universal ribosomal protein uS15 family. In terms of assembly, part of the 30S ribosomal subunit. Forms a bridge to the 50S subunit in the 70S ribosome, contacting the 23S rRNA.

Its function is as follows. One of the primary rRNA binding proteins, it binds directly to 16S rRNA where it helps nucleate assembly of the platform of the 30S subunit by binding and bridging several RNA helices of the 16S rRNA. In terms of biological role, forms an intersubunit bridge (bridge B4) with the 23S rRNA of the 50S subunit in the ribosome. In Cytophaga hutchinsonii (strain ATCC 33406 / DSM 1761 / CIP 103989 / NBRC 15051 / NCIMB 9469 / D465), this protein is Small ribosomal subunit protein uS15.